Consider the following 254-residue polypeptide: Alcohol dehydrogenase (254 aa).

10–33 (FVAGLGGIGLDTSREIVKSGPKNL) contributes to the NAD(+) binding site. Ser-138 lines the substrate pocket. Tyr-151 serves as the catalytic Proton acceptor.

The protein belongs to the short-chain dehydrogenases/reductases (SDR) family. In terms of assembly, homodimer.

The catalysed reaction is a primary alcohol + NAD(+) = an aldehyde + NADH + H(+). The enzyme catalyses a secondary alcohol + NAD(+) = a ketone + NADH + H(+). The sequence is that of Alcohol dehydrogenase (Adh) from Drosophila picticornis (Fruit fly).